We begin with the raw amino-acid sequence, 395 residues long: MDLFEYQARDVFEKHGVPVLGGIVATTVDEARAAAETLTSGAGSVVVVKAQVKTGGRGKAGGVKLARSPEEAAEAAEQILGMDIKGHTVHRVMIAEGASIAEEYYFSVLLDRANRSYLAMASVEGGVEIEQLAVERPEALARVAVDPLVGIDAAKAAEIVAAAGFADDVAGAVADVIQKLWTVYDAEDATLVEVNPLVRTTDGRVIALDGKVTLDDNAEFRHPEHAELEDAASADPLEAKAKAHDLNYVKLDGEVGIIGNGAGLVMSTLDVVAYAGERHGGVKPANFLDIGGGASAAVMAAGLDVILGDPQVKSVFVNVFGGITACDEVARGIVQALEILGDKENKPLVVRLDGNAVEEGRAILAEANHPLVTLAETMDGGADAAAAAAHSAVTA.

The 232-residue stretch at 9–240 folds into the ATP-grasp domain; the sequence is RDVFEKHGVP…AASADPLEAK (232 aa). Residues Lys49, 56-58, Ala98, and Glu103 contribute to the ATP site; that span reads GRG. Asn195 and Asp209 together coordinate Mg(2+). Substrate is bound by residues Asn260 and 322 to 324; that span reads GIT.

Belongs to the succinate/malate CoA ligase beta subunit family. Heterotetramer of two alpha and two beta subunits. Requires Mg(2+) as cofactor.

The catalysed reaction is succinate + ATP + CoA = succinyl-CoA + ADP + phosphate. The enzyme catalyses GTP + succinate + CoA = succinyl-CoA + GDP + phosphate. The protein operates within carbohydrate metabolism; tricarboxylic acid cycle; succinate from succinyl-CoA (ligase route): step 1/1. Succinyl-CoA synthetase functions in the citric acid cycle (TCA), coupling the hydrolysis of succinyl-CoA to the synthesis of either ATP or GTP and thus represents the only step of substrate-level phosphorylation in the TCA. The beta subunit provides nucleotide specificity of the enzyme and binds the substrate succinate, while the binding sites for coenzyme A and phosphate are found in the alpha subunit. This Beutenbergia cavernae (strain ATCC BAA-8 / DSM 12333 / CCUG 43141 / JCM 11478 / NBRC 16432 / NCIMB 13614 / HKI 0122) protein is Succinate--CoA ligase [ADP-forming] subunit beta.